The sequence spans 346 residues: Probable aldo-keto reductase 2 (346 aa).

Tyr63 (proton donor) is an active-site residue. His131 is a binding site for substrate. Residue Ser210–Gly220 participates in NADP(+) binding.

The protein belongs to the aldo/keto reductase family. Aldo/keto reductase 13 subfamily.

The sequence is that of Probable aldo-keto reductase 2 (AGD2) from Arabidopsis thaliana (Mouse-ear cress).